Reading from the N-terminus, the 465-residue chain is Hydroxyacid-oxoacid transhydrogenase, mitochondrial (465 aa).

It belongs to the iron-containing alcohol dehydrogenase family. Hydroxyacid-oxoacid transhydrogenase subfamily.

The protein localises to the mitochondrion. The catalysed reaction is (S)-3-hydroxybutanoate + 2-oxoglutarate = (R)-2-hydroxyglutarate + acetoacetate. It carries out the reaction 4-hydroxybutanoate + 2-oxoglutarate = (R)-2-hydroxyglutarate + succinate semialdehyde. Catalyzes the cofactor-independent reversible oxidation of gamma-hydroxybutyrate (GHB) to succinic semialdehyde (SSA) coupled to reduction of 2-ketoglutarate (2-KG) to D-2-hydroxyglutarate (D-2-HG). L-3-hydroxybutyrate (L-3-OHB) is also a substrate for HOT when using 2-KG as hydrogen acceptor, resulting in the formation of D-2-HG. The polypeptide is Hydroxyacid-oxoacid transhydrogenase, mitochondrial (Caenorhabditis briggsae).